Reading from the N-terminus, the 278-residue chain is Probable endonuclease 4 (278 aa).

9 residues coordinate Zn(2+): His70, His108, Glu143, Asp176, His179, His210, Asp223, His225, and Glu255.

The protein belongs to the AP endonuclease 2 family. The cofactor is Zn(2+).

It carries out the reaction Endonucleolytic cleavage to 5'-phosphooligonucleotide end-products.. Its function is as follows. Endonuclease IV plays a role in DNA repair. It cleaves phosphodiester bonds at apurinic or apyrimidinic (AP) sites, generating a 3'-hydroxyl group and a 5'-terminal sugar phosphate. The sequence is that of Probable endonuclease 4 from Mycoplasmopsis agalactiae (strain NCTC 10123 / CIP 59.7 / PG2) (Mycoplasma agalactiae).